Here is a 226-residue protein sequence, read N- to C-terminus: Isoprenyl transferase (226 aa).

The active site involves Asp-12. Mg(2+) is bound at residue Asp-12. Substrate is bound by residues 13 to 16, Trp-17, Lys-25, His-29, and 57 to 59; these read GNAR and SSE. The active-site Proton acceptor is the Asn-60. Residues Trp-61, Arg-63, Arg-174, and 180 to 182 contribute to the substrate site; that span reads RIS. Glu-193 lines the Mg(2+) pocket.

It belongs to the UPP synthase family. In terms of assembly, homodimer. Mg(2+) is required as a cofactor.

Functionally, catalyzes the condensation of isopentenyl diphosphate (IPP) with allylic pyrophosphates generating different type of terpenoids. The sequence is that of Isoprenyl transferase from Rickettsia bellii (strain RML369-C).